The chain runs to 220 residues: Deoxyribose-phosphate aldolase (220 aa).

The active-site Proton donor/acceptor is the Asp89. Lys151 acts as the Schiff-base intermediate with acetaldehyde in catalysis. The active-site Proton donor/acceptor is the Lys180.

The protein belongs to the DeoC/FbaB aldolase family. DeoC type 1 subfamily.

It localises to the cytoplasm. The catalysed reaction is 2-deoxy-D-ribose 5-phosphate = D-glyceraldehyde 3-phosphate + acetaldehyde. The protein operates within carbohydrate degradation; 2-deoxy-D-ribose 1-phosphate degradation; D-glyceraldehyde 3-phosphate and acetaldehyde from 2-deoxy-alpha-D-ribose 1-phosphate: step 2/2. Functionally, catalyzes a reversible aldol reaction between acetaldehyde and D-glyceraldehyde 3-phosphate to generate 2-deoxy-D-ribose 5-phosphate. The chain is Deoxyribose-phosphate aldolase from Staphylococcus carnosus (strain TM300).